The sequence spans 396 residues: MEFSQFKVNALMEITARPDLVFVRGQGSWLEDHAGKRYLDFVQGWAVNTLGHCAPEMKRAMAEQADKLMNPSPAFYNLPSIELAQRLTSASCFDRVFFANSGAEANEGAIKLARKWGRVNRNGAYKIITMNHGFHGRTLATMSASGKPGWDTMFAPQVEGFPKAEINDLDSVRALIDAQTVAVMLEPVQGEAGVIPATREFMQGLRKLADEHGILFIVDEVQTGMGRTGSLFAYQQFDVIPDIMTLAKGIGGGIPLAALLAREEVCVFAHGDQGGTYNGNPLCAAVGVAVFDTITAPGFMEAAQARTRQLSEGLLALSAKWSLRGERGMGLLRALVLDRDDAPAIVEAARMLAPEGLLLNAPRGNLLRFMPALNVTEADMARMLEQLDGVIAAVRK.

Pyridoxal 5'-phosphate is bound by residues 102 to 103 (GA) and F134. R137 is a binding site for N(2)-acetyl-L-ornithine. 219–222 (DEVQ) contributes to the pyridoxal 5'-phosphate binding site. N6-(pyridoxal phosphate)lysine is present on K248. A pyridoxal 5'-phosphate-binding site is contributed by T276.

Belongs to the class-III pyridoxal-phosphate-dependent aminotransferase family. ArgD subfamily. In terms of assembly, homodimer. The cofactor is pyridoxal 5'-phosphate.

Its subcellular location is the cytoplasm. It carries out the reaction N(2)-acetyl-L-ornithine + 2-oxoglutarate = N-acetyl-L-glutamate 5-semialdehyde + L-glutamate. It participates in amino-acid biosynthesis; L-arginine biosynthesis; N(2)-acetyl-L-ornithine from L-glutamate: step 4/4. The polypeptide is Acetylornithine aminotransferase 2 (Bordetella pertussis (strain Tohama I / ATCC BAA-589 / NCTC 13251)).